The sequence spans 239 residues: Cysteine-rich venom protein (239 aa).

The first 19 residues, 1 to 19, serve as a signal peptide directing secretion; sequence MIAFLVLPILAAVLQQSSG. The SCP domain occupies 39–166; it reads DLHNSLRRSV…EYKYFYVCQY (128 aa). Cystine bridges form between C75–C153, C92–C167, C148–C164, C186–C193, C189–C198, C202–C234, C211–C228, and C219–C232. Residues 202-234 form the ShKT domain; the sequence is CTHEDKFTNCKDLVKQGCNNNYLKTNCPASCSC.

The protein belongs to the CRISP family. As to expression, expressed by the venom gland.

Its subcellular location is the secreted. Its function is as follows. Blocks contraction of smooth muscle elicited by high potassium-induced depolarization, but does not block caffeine-stimulated contraction. May target voltage-gated calcium channels in smooth muscle. This Vipera berus (Common European adder) protein is Cysteine-rich venom protein.